Consider the following 549-residue polypeptide: FMRFamide receptor (549 aa).

Residues 1–117 (MSGTAVARLL…NNRIEFWVCG (117 aa)) lie on the Extracellular side of the membrane. N-linked (GlcNAc...) asparagine glycans are attached at residues Asn59, Asn70, and Asn93. The helical transmembrane segment at 118–138 (VLINIVGVLGILGNIISMIIL) threads the bilayer. At 139 to 158 (SRPQMRSSINYLLTGLARCD) the chain is on the cytoplasmic side. The helical transmembrane segment at 159–179 (TVLIITSILLFGIPSIYPYTG) threads the bilayer. At 180–181 (HF) the chain is on the extracellular side. The helical transmembrane segment at 182-202 (FGYYNYVYPFISPAVFPIGMI) threads the bilayer. The Cytoplasmic portion of the chain corresponds to 203 to 238 (AQTASIYMTFTVTLERYVAVCHPLKARALCTYGRAK). The helical transmembrane segment at 239 to 259 (IYFIVCVCFSLAYNMPRFWEV) threads the bilayer. Topologically, residues 260–289 (LTVTYPEPGKDVILHCVRPSRLRRSETYIN) are extracellular. Residues 290–310 (IYIHWCYLIVNYIIPFLTLAI) traverse the membrane as a helical segment. Residues 311–341 (LNCLIYRQVKRANRERQRLSRSEKREIGLAT) are Cytoplasmic-facing. Residues 342–362 (MLLCVVIVFFMLNFLPLVLNI) form a helical membrane-spanning segment. Topologically, residues 363 to 376 (SEAFYSTIDHKITK) are extracellular. A helical transmembrane segment spans residues 377-397 (ISNLLITINSSVNFLIYIIFG). Residues 398-549 (EKFKRIFLLI…KKLGHVSSGF (152 aa)) lie on the Cytoplasmic side of the membrane.

It belongs to the G-protein coupled receptor 1 family. Expressed in ovaries, heads and bodies. Expressed in dopaminergic neurons.

The protein resides in the cell membrane. Its function is as follows. A receptor for the FMRFamide peptides. Reacts with high affinity to FMRFamide and intrinsic FMRFamide-related peptides. By stimulating intracellular calcium signaling through the inositol 1,4,5-trisphosphate receptor, Itpr, in dopaminergic neurons, may be involved in the maintenance of neuronal excitability and in the regulation of flight bout duration. In Drosophila melanogaster (Fruit fly), this protein is FMRFamide receptor.